The following is a 486-amino-acid chain: Serine/threonine-protein phosphatase 2A 56 kDa regulatory subunit alpha isoform (486 aa).

A compositionally biased stretch (low complexity) spans 1 to 18 (MSSSSPPAGAASAAISAS). A disordered region spans residues 1 to 52 (MSSSSPPAGAASAAISASEKVDGFTRKSVRKAQRQKRSQGSSQFRSQGSQAE). At Ser2 the chain carries N-acetylserine. The segment covering 27 to 37 (KSVRKAQRQKR) has biased composition (basic residues). Over residues 38 to 51 (SQGSSQFRSQGSQA) the composition is skewed to low complexity. Residues Ser41, Ser42, and Ser49 each carry the phosphoserine modification.

Belongs to the phosphatase 2A regulatory subunit B56 family. PP2A consists of a common heterodimeric core enzyme, composed of a 36 kDa catalytic subunit (subunit C) and a 65 kDa constant regulatory subunit (PR65 or subunit A), that associates with a variety of regulatory subunits. Proteins that associate with the core dimer include three families of regulatory subunits B (the R2/B/PR55/B55, R3/B''/PR72/PR130/PR59 and R5/B'/B56 families), the 48 kDa variable regulatory subunit, viral proteins, and cell signaling molecules. Interacts with SGO1. Phosphorylated on serine residues. As to expression, widely expressed with the highest expression in heart and skeletal muscle.

It is found in the cytoplasm. It localises to the nucleus. Its subcellular location is the chromosome. The protein localises to the centromere. Its function is as follows. The B regulatory subunit might modulate substrate selectivity and catalytic activity, and might also direct the localization of the catalytic enzyme to a particular subcellular compartment. The chain is Serine/threonine-protein phosphatase 2A 56 kDa regulatory subunit alpha isoform (PPP2R5A) from Homo sapiens (Human).